We begin with the raw amino-acid sequence, 128 residues long: Small ribosomal subunit protein uS11m (128 aa).

The protein belongs to the universal ribosomal protein uS11 family.

The protein localises to the mitochondrion. The protein is Small ribosomal subunit protein uS11m (RPS11) of Prototheca wickerhamii.